A 352-amino-acid chain; its full sequence is RNA 3'-terminal phosphate cyclase (352 aa).

ATP-binding positions include glutamine 100 and 297–301 (HLADQ). Histidine 322 (tele-AMP-histidine intermediate) is an active-site residue.

The protein belongs to the RNA 3'-terminal cyclase family. Type 1 subfamily.

The protein resides in the cytoplasm. The catalysed reaction is a 3'-end 3'-phospho-ribonucleotide-RNA + ATP = a 3'-end 2',3'-cyclophospho-ribonucleotide-RNA + AMP + diphosphate. Catalyzes the conversion of 3'-phosphate to a 2',3'-cyclic phosphodiester at the end of RNA. The mechanism of action of the enzyme occurs in 3 steps: (A) adenylation of the enzyme by ATP; (B) transfer of adenylate to an RNA-N3'P to produce RNA-N3'PP5'A; (C) and attack of the adjacent 2'-hydroxyl on the 3'-phosphorus in the diester linkage to produce the cyclic end product. The biological role of this enzyme is unknown but it is likely to function in some aspects of cellular RNA processing. The chain is RNA 3'-terminal phosphate cyclase from Methanosarcina mazei (strain ATCC BAA-159 / DSM 3647 / Goe1 / Go1 / JCM 11833 / OCM 88) (Methanosarcina frisia).